A 456-amino-acid chain; its full sequence is Tyrosinase-like protein 2 (456 aa).

A signal peptide spans 1-22 (MNTMALFGKVILLQFLIGVGFC). Positions 145, 154, 163, 295, 299, and 322 each coordinate Cu cation.

Cu(2+) is required as a cofactor. As to expression, prismatic layer of shell (at protein level).

Its subcellular location is the secreted. The protein is Tyrosinase-like protein 2 of Margaritifera margaritifera (Freshwater pearl mussel).